The sequence spans 60 residues: Three-finger toxin Mnn I (60 aa).

4 disulfides stabilise this stretch: Cys3–Cys22, Cys17–Cys39, Cys41–Cys52, and Cys53–Cys58.

Belongs to the three-finger toxin family. Short-chain subfamily. Type I alpha-neurotoxin sub-subfamily. As to expression, expressed by the venom gland.

The protein localises to the secreted. Functionally, binds to muscle nicotinic acetylcholine receptor (nAChR) and inhibit acetylcholine from binding to the receptor, thereby impairing neuromuscular transmission. The chain is Three-finger toxin Mnn I from Micrurus nigrocinctus (Central American coral snake).